A 1248-amino-acid chain; its full sequence is MQSLSDIPPSIYLFSCPNCGRSISTYRLLLGSVCNICLEEDKEYKNIGDLIKDIEKQGNLIKLKDIQRVLDDYESFVSVFRRLLGFPPFGPQKSWIYRLLSGESFAIIAPPGLGKTTFGLISSIYLYLRGKKSILVFPTKSLVRQAIDKLSSYIQNLAEIKENPPKVIYYYSGMSASERKEADEGLQSKTFDIFISTNRFLIDNIDQISSTSYQFLFVDDVDTALKSSKSAQAILKLLGFTPSDQDKIKESLKKYRENTQKNEQNEYIFEEIDKIRKDRLASKTVIFSSATLNRSNPILTSLVGFKPGSSVIYIRKVYDMYVKQPDKEQETFNLIKSLLHRLGDGGLIFVPVDKKQEYIKRLQSELSNEFNVAAITSTSATKIDDFANGEIDVLIGSATHYGILVRGLDLPWRVKYSIFVGIPKFKFRLGEKVNLLTLSRLLSLIALITKDQEVIYISRRVKDKIRRLSPAALTMLSVQAKEGKLEDSILLKAYDLLNKYLSNQNVLKRISEIGDFVLSPDNDILIPDYLTYVQASGRTSRIYAGDVTTGLSILLVDDFNLFRLLNKKLQYILDDIQWRELDVEKWTAGDVEIKNLISKINEERNEISKLKNEGNVAPALQKVKTVLLVVESPNKAKTISSFFSRPSIRQIGNMRVYETVLGDKVLMVTASGGHVYDLTTQDMGIYGVDIMKQNSSLVFIPIYNSIKKCENNHQFTDFFESNKCPRCMTTKVRYDSLKSINVLRNLAVEADEVLIGTDPDTEGEKIAWDLYLALRPYNSNIRRAEFHEVTRKAILQAINQPREFNVNLVKSQLVRRIEDRWIGFKLSSILQTRFWPEYCKSLSSNKQLNCNENKNLSAGRVQTPVLSWIVDRYTEYQRNKSRVYYGKIDQLQDIVIYVPKQDGVRKNSKIVVVFNEINQLEEEFGPLPPYTTDTLLSDSNNFFGLSAPETMRIAQDLFELGLITYHRTDSNRISNTGISVAENYLKDVLGDKYTNIFKPRSWGDGGAHEGIRPTKPIDVEQLRLLIEEGELELAKRLTNNHFKVYDIIFRRFISSQIIPLKVRKEIVKIELYGENKKEKINSNQNIIEVITGITLPGIDTEISKFAYVPVRNVSRSVAERLKELGRSIPTDFSIEISNSFIKSTVNLYTQADLVMEMKNKKIGRPSTYATIIGTILRRGYVLESLKTKKLIPTRLGVEVNKYLNENYGRFVSEDRTRKLLQLMDMVEAGQEKYEEVLKQVYEEINEIR.

Residues 7 to 44 (IPPSIYLFSCPNCGRSISTYRLLLGSVCNICLEEDKEY) form an RG N-terminal-type zinc finger. 4 residues coordinate Zn(2+): C16, C19, C34, and C37. Residues Q92 and 109–116 (APPGLGKT) contribute to the ATP site. The Helicase ATP-binding domain maps to 96–262 (IYRLLSGESF…KKYRENTQKN (167 aa)). Positions 219–222 (DDVD) match the DEAD box motif. Positions 621-1248 (QKVKTVLLVV…QVYEEINEIR (628 aa)) are topoisomerase I. In terms of domain architecture, Toprim spans 625–789 (TVLLVVESPN…NIRRAEFHEV (165 aa)). E631 lines the Mg(2+) pocket. The segment at 706–735 (IKKCENNHQFTDFFESNKCPRCMTTKVRYD) adopts an RG C-terminal-type; atypical zinc-finger fold. C709, H713, C724, and C727 together coordinate Zn(2+). D758 contacts Mg(2+). In terms of domain architecture, Topo IA-type catalytic spans 805–1248 (NVNLVKSQLV…QVYEEINEIR (444 aa)). Y965 functions as the O-(5'-phospho-DNA)-tyrosine intermediate in the catalytic mechanism.

The protein in the N-terminal section; belongs to the DEAD box helicase family. DDVD subfamily. This sequence in the C-terminal section; belongs to the type IA topoisomerase family. Monomer. Requires Zn(2+) as cofactor. It depends on Mg(2+) as a cofactor. In terms of processing, the N-terminus is blocked.

It is found in the cytoplasm. The enzyme catalyses ATP + H2O = ADP + phosphate + H(+). Its function is as follows. Modifies the topological state of DNA by introducing positive supercoils in an ATP-dependent process. Increases the linking number in steps of +1. Has a DNA-stimulated ATPase activity; closed circular ssDNA stimulates ATPase much better than dsDNA although negative supercoiled, positive supercoiled and relaxed dsDNA all stimulate ATPase activity. All NTPs permit topoisomerization (relaxation) of negatively supercoiled dsDNA without nucleotide hydrolysis. It transiently cleaves a single DNA strand and remains covalently bound to the 5' DNA end. Acts via a tyrosine residue. Reverse gyrase binds and unwinds DNA independently of ATP binding and DNA cleavage. May be involved in rewinding the DNA strands in the regions of the chromosome that have opened up to allow transcription or replication, probably acts via ssDNA regions of the chromosome. The polypeptide is Reverse gyrase 1 (Sulfolobus acidocaldarius (strain ATCC 33909 / DSM 639 / JCM 8929 / NBRC 15157 / NCIMB 11770)).